A 181-amino-acid polypeptide reads, in one-letter code: Cytochrome c-type biogenesis protein CcmE (181 aa).

Topologically, residues 1-8 are cytoplasmic; that stretch reads MNPRRKSR. Residues 9 to 29 form a helical; Signal-anchor for type II membrane protein membrane-spanning segment; that stretch reads LKVVVLIMFSVAVAAGLTLYA. Topologically, residues 30-181 are periplasmic; the sequence is LSQNIDLFYT…TFNTLQGESK (152 aa). The heme site is built by His-131 and Tyr-135.

It belongs to the CcmE/CycJ family.

Its subcellular location is the cell inner membrane. Its function is as follows. Heme chaperone required for the biogenesis of c-type cytochromes. Transiently binds heme delivered by CcmC and transfers the heme to apo-cytochromes in a process facilitated by CcmF and CcmH. This chain is Cytochrome c-type biogenesis protein CcmE, found in Haemophilus ducreyi (strain 35000HP / ATCC 700724).